The sequence spans 273 residues: Tryptophan synthase alpha chain (273 aa).

Active-site proton acceptor residues include Glu56 and Asp67.

It belongs to the TrpA family. Tetramer of two alpha and two beta chains.

The catalysed reaction is (1S,2R)-1-C-(indol-3-yl)glycerol 3-phosphate + L-serine = D-glyceraldehyde 3-phosphate + L-tryptophan + H2O. Its pathway is amino-acid biosynthesis; L-tryptophan biosynthesis; L-tryptophan from chorismate: step 5/5. The alpha subunit is responsible for the aldol cleavage of indoleglycerol phosphate to indole and glyceraldehyde 3-phosphate. The sequence is that of Tryptophan synthase alpha chain from Shewanella baltica (strain OS155 / ATCC BAA-1091).